The chain runs to 619 residues: UPF0329 protein ECU01_0100/ECU01_1510/ECU08_0030 (619 aa).

Residues 350-384 (REEREKREKREKREESKGRGKRGAGEAKEESKEED) show a composition bias toward basic and acidic residues. The disordered stretch occupies residues 350–428 (REEREKREKR…GKRKGDGHHY (79 aa)). Over residues 385–399 (GKEEEGVEAEEEESA) the composition is skewed to acidic residues. The segment covering 411-428 (ARRKKSLKGKRKGDGHHY) has biased composition (basic residues).

This sequence belongs to the UPF0329 family.

This Encephalitozoon cuniculi (strain GB-M1) (Microsporidian parasite) protein is UPF0329 protein ECU01_0100/ECU01_1510/ECU08_0030.